The primary structure comprises 1637 residues: Serine/threonine-protein kinase Genghis Khan (1637 aa).

The region spanning 100–369 is the Protein kinase domain; it reads FDILKIIGRG…IQDFMDHPWF (270 aa). ATP is bound by residues 106 to 114 and lysine 129; that span reads IGRGAFGEV. Aspartate 224 acts as the Proton acceptor in catalysis. Positions 370-440 constitute an AGC-kinase C-terminal domain; that stretch reads VGIDWKNIRQ…SLTSSSTLDS (71 aa). Coiled coils occupy residues 473 to 587, 643 to 688, and 839 to 881; these read VDSV…EDAV, SEKL…LKYT, and DELS…DLQK. Positions 538–575 are disordered; that stretch reads RNQKQKLSRQVRDKEEELDGAMQKNDSLRNELRKSDKT. Positions 563 to 575 are enriched in basic and acidic residues; that stretch reads DSLRNELRKSDKT. Residue threonine 895 is modified to Phosphothreonine. The segment at 952-971 is disordered; it reads NNKDHSSMKEASVSDLSREE. A Phorbol-ester/DAG-type zinc finger spans residues 989–1039; sequence IHQFLVRTFSSPTKCNHCTSLMVGLTRQGVVCEICGFACHTICCQKVPTTC. The PH domain occupies 1059–1177; it reads GTAYEGYVKV…WVIALGELHR (119 aa). A CNH domain is found at 1203 to 1489; that stretch reads IRNALCSVII…LPLNNLGNVV (287 aa). The 14-residue stretch at 1546–1559 folds into the CRIB domain; that stretch reads ISAPTNFNHISHMG. The residue at position 1584 (serine 1584) is a Phosphoserine. The segment at 1611-1637 is disordered; it reads DYGNDNIISRTPSPMASSFMDGLSNND. Residues 1616 to 1626 are compositionally biased toward polar residues; it reads NIISRTPSPMA.

This sequence belongs to the protein kinase superfamily. AGC Ser/Thr protein kinase family. DMPK subfamily. Interacts tightly with GTP-bound but not GDP-bound Cdc42.

It catalyses the reaction L-seryl-[protein] + ATP = O-phospho-L-seryl-[protein] + ADP + H(+). It carries out the reaction L-threonyl-[protein] + ATP = O-phospho-L-threonyl-[protein] + ADP + H(+). Acts as a downstream effector for the regulation of actin polymerization by Cdc42. The polypeptide is Serine/threonine-protein kinase Genghis Khan (gek) (Drosophila melanogaster (Fruit fly)).